Here is a 444-residue protein sequence, read N- to C-terminus: Putative cytochrome P450 120 (444 aa).

Cys391 contributes to the heme binding site.

Belongs to the cytochrome P450 family. Requires heme as cofactor.

This chain is Putative cytochrome P450 120 (cyp120), found in Synechocystis sp. (strain ATCC 27184 / PCC 6803 / Kazusa).